We begin with the raw amino-acid sequence, 551 residues long: Interleukin-2 receptor subunit beta (551 aa).

The signal sequence occupies residues 1–26; sequence MAAPALSWRLPLLILLLPLATSWASA. Residues 27–240 lie on the Extracellular side of the membrane; that stretch reads AVNGTSQFTC…TKPAALGKDT (214 aa). N-linked (GlcNAc...) asparagine glycans are attached at residues Asn-29, Asn-43, and Asn-71. Cystine bridges form between Cys-36–Cys-46, Cys-59–Cys-110, and Cys-74–Cys-86. The 101-residue stretch at 134–234 folds into the Fibronectin type-III domain; it reads APISLQVVHV…QPLAFRTKPA (101 aa). N-linked (GlcNAc...) asparagine glycosylation occurs at Asn-149. Residues 220–224 carry the WSXWS motif motif; that stretch reads WSPWS. The chain crosses the membrane as a helical span at residues 241 to 265; that stretch reads IPWLGHLLVGLSGAFGFIILVYLLI. The Cytoplasmic portion of the chain corresponds to 266–551; that stretch reads NCRNTGPWLK…LQGQDPTHLV (286 aa). The short motif at 278–286 is the Box 1 motif element; it reads LKCNTPDPS. 2 disordered regions span residues 389-416 and 432-486; these read EEDPDEGVAGAPTGSSPQPLQPLSGEDD and PSLL…VDFQ.

Belongs to the type I cytokine receptor family. Type 4 subfamily. In terms of assembly, non-covalent dimer of an alpha and a beta subunit. IL2R exists in 3 different forms: a high affinity dimer, an intermediate affinity monomer (beta subunit), and a low affinity monomer (alpha subunit). The high and intermediate affinity forms also associate with a gamma subunit. Interacts with SHB upon interleukin stimulation. (Microbial infection) Interacts with HTLV-1 accessory protein p12I.

Its subcellular location is the cell membrane. Receptor for interleukin-2. This beta subunit is involved in receptor mediated endocytosis and transduces the mitogenic signals of IL2. Probably in association with IL15RA, involved in the stimulation of neutrophil phagocytosis by IL15. This chain is Interleukin-2 receptor subunit beta, found in Homo sapiens (Human).